We begin with the raw amino-acid sequence, 168 residues long: Gastrula zinc finger protein XlCGF7.1 (168 aa).

6 consecutive C2H2-type zinc fingers follow at residues 6-28 (FTCTECGKGFSDKSNLRSHQRTH), 34-56 (FTCTECGKSFSQKIGLHNHLKCH), 62-84 (FMCTECGKSFSNKSNLHTHRKIH), 90-112 (YICTECGKTFPRKKNLQSHQTVH), 118-140 (FTCSECGKCFSQKKNLHTHQKIH), and 146-168 (FKCNECGQAFLRKRNLLSHERIH).

This sequence belongs to the krueppel C2H2-type zinc-finger protein family.

Its subcellular location is the nucleus. In terms of biological role, may be involved in transcriptional regulation. In Xenopus laevis (African clawed frog), this protein is Gastrula zinc finger protein XlCGF7.1.